Here is an 869-residue protein sequence, read N- to C-terminus: MKSSEIREKFLKFFESKGHTIVASSPLVPGNDPTLMFTNSGMVQFKDVFLGEDKRPYVRATSVQACLRAGGKHNDLENVGYTARHHTFFEMLGNWSFGDYFKRDALMWSWELLTKVYGLPGDKLLATVYIEDQEAYDIWTKEIGLPPERVIRIGDNKGGRYKSDNFWMMADTGPCGPCSEIFYDHGPHIAGGPPGSPDEDGDRYIEIWNNVFMQFDMAEDGTVKPLPAPCVDTGMGLERLAAILQGVHSNYEIDTFAALIKAAGRETNTKDLTNNSLKVIADHIRATAFLVADGVIPSNEGRGYVQRRIIRRAIRHGYKLGQKKPFFHKLVKDLVEQMGEAYPKLQADAQRITEVLKAEEERFFETLANGMEILDAALAGGVKVLPGEVAFKLHDTFGFPLDLSADVCREAGVSVDEAGFAAAMEKQKAAGRAAGKFKMERAVEYTGAGNVFTGYENLQEDATVVGLYFEGTAVQQLKEGQAGIVVLDTTPFYAESGGQVGDQGFVSAEGVQFGVEDTQKIKADVYGHHGVQTQGTLKVGDKVQAAVDGARRAATMRNHSVTHIMHKALREVLGEHVQQKGSLVDAEKTRFDFAHNAPVTHEQILEIEKRVNAEILANSDTQARVMDIESAQKTGAMMLFGEKYGETVRVLDIGSSRELCGGTHVSRTGDIGLFKVVGESGVAAGVRRIEAITGANALSYFQDLEATVHSAAATLKSPPAELQPRLAQVLDQVKTLEREINALKGKLASSQGDELLSQAVEIKGIKVLAAKLENADAGTLRTTMDTLKDKLKTAAIVLAAVNDGKVSLIAGVTADATGKVKAGELVNFVAQQVGGKGGGRADMAQAGGTDASGLPAALQGVAAWVAERA.

Zn(2+)-binding residues include histidine 559, histidine 563, cysteine 660, and histidine 664.

It belongs to the class-II aminoacyl-tRNA synthetase family. It depends on Zn(2+) as a cofactor.

The protein resides in the cytoplasm. The enzyme catalyses tRNA(Ala) + L-alanine + ATP = L-alanyl-tRNA(Ala) + AMP + diphosphate. Its function is as follows. Catalyzes the attachment of alanine to tRNA(Ala) in a two-step reaction: alanine is first activated by ATP to form Ala-AMP and then transferred to the acceptor end of tRNA(Ala). Also edits incorrectly charged Ser-tRNA(Ala) and Gly-tRNA(Ala) via its editing domain. In Herminiimonas arsenicoxydans, this protein is Alanine--tRNA ligase.